Here is an 85-residue protein sequence, read N- to C-terminus: Small ribosomal subunit protein uS17 (85 aa).

The protein belongs to the universal ribosomal protein uS17 family. In terms of assembly, part of the 30S ribosomal subunit.

Its function is as follows. One of the primary rRNA binding proteins, it binds specifically to the 5'-end of 16S ribosomal RNA. The chain is Small ribosomal subunit protein uS17 from Agathobacter rectalis (strain ATCC 33656 / DSM 3377 / JCM 17463 / KCTC 5835 / VPI 0990) (Eubacterium rectale).